We begin with the raw amino-acid sequence, 401 residues long: Probable tRNA sulfurtransferase (401 aa).

Residues 60 to 165 (EPISEQLKGV…EQATYITFKD (106 aa)) form the THUMP domain. ATP is bound by residues 183 to 184 (ML), 208 to 209 (HF), R265, G287, and Q296.

It belongs to the ThiI family.

It localises to the cytoplasm. It carries out the reaction [ThiI sulfur-carrier protein]-S-sulfanyl-L-cysteine + a uridine in tRNA + 2 reduced [2Fe-2S]-[ferredoxin] + ATP + H(+) = [ThiI sulfur-carrier protein]-L-cysteine + a 4-thiouridine in tRNA + 2 oxidized [2Fe-2S]-[ferredoxin] + AMP + diphosphate. It catalyses the reaction [ThiS sulfur-carrier protein]-C-terminal Gly-Gly-AMP + S-sulfanyl-L-cysteinyl-[cysteine desulfurase] + AH2 = [ThiS sulfur-carrier protein]-C-terminal-Gly-aminoethanethioate + L-cysteinyl-[cysteine desulfurase] + A + AMP + 2 H(+). The protein operates within cofactor biosynthesis; thiamine diphosphate biosynthesis. Catalyzes the ATP-dependent transfer of a sulfur to tRNA to produce 4-thiouridine in position 8 of tRNAs, which functions as a near-UV photosensor. Also catalyzes the transfer of sulfur to the sulfur carrier protein ThiS, forming ThiS-thiocarboxylate. This is a step in the synthesis of thiazole, in the thiamine biosynthesis pathway. The sulfur is donated as persulfide by IscS. The polypeptide is Probable tRNA sulfurtransferase (Bacillus pumilus (strain SAFR-032)).